The primary structure comprises 229 residues: Large ribosomal subunit protein uL1 (229 aa).

The protein belongs to the universal ribosomal protein uL1 family. As to quaternary structure, part of the 50S ribosomal subunit.

Its function is as follows. Binds directly to 23S rRNA. The L1 stalk is quite mobile in the ribosome, and is involved in E site tRNA release. Functionally, protein L1 is also a translational repressor protein, it controls the translation of the L11 operon by binding to its mRNA. This is Large ribosomal subunit protein uL1 from Flavobacterium psychrophilum (strain ATCC 49511 / DSM 21280 / CIP 103535 / JIP02/86).